The primary structure comprises 228 residues: RNA-free ribonuclease P (228 aa).

This sequence belongs to the HARP family.

The enzyme catalyses Endonucleolytic cleavage of RNA, removing 5'-extranucleotides from tRNA precursor.. In terms of biological role, RNA-free RNase P that catalyzes the removal of the 5'-leader sequence from pre-tRNA to produce the mature 5'-terminus. The protein is RNA-free ribonuclease P of Methanopyrus kandleri (strain AV19 / DSM 6324 / JCM 9639 / NBRC 100938).